The following is a 388-amino-acid chain: Succinate--CoA ligase [ADP-forming] subunit beta (388 aa).

Positions Lys-9–Gln-244 constitute an ATP-grasp domain. Residues Lys-46, Gly-53–Gly-55, Glu-99, Cys-102, and Glu-107 contribute to the ATP site. 2 residues coordinate Mg(2+): Asn-199 and Asp-213. Residues Asn-264 and Gly-321–Met-323 contribute to the substrate site.

Belongs to the succinate/malate CoA ligase beta subunit family. As to quaternary structure, heterotetramer of two alpha and two beta subunits. It depends on Mg(2+) as a cofactor.

It catalyses the reaction succinate + ATP + CoA = succinyl-CoA + ADP + phosphate. The enzyme catalyses GTP + succinate + CoA = succinyl-CoA + GDP + phosphate. Its pathway is carbohydrate metabolism; tricarboxylic acid cycle; succinate from succinyl-CoA (ligase route): step 1/1. Functionally, succinyl-CoA synthetase functions in the citric acid cycle (TCA), coupling the hydrolysis of succinyl-CoA to the synthesis of either ATP or GTP and thus represents the only step of substrate-level phosphorylation in the TCA. The beta subunit provides nucleotide specificity of the enzyme and binds the substrate succinate, while the binding sites for coenzyme A and phosphate are found in the alpha subunit. This chain is Succinate--CoA ligase [ADP-forming] subunit beta, found in Anaeromyxobacter dehalogenans (strain 2CP-C).